The sequence spans 277 residues: RNA-binding protein pno-1 (277 aa).

2 disordered regions span residues 1-52 and 72-100; these read MATS…KLVK and DEDA…GESR. The span at 8–27 shows a compositional bias: acidic residues; the sequence is FDDELPMEEGMPELLDDEDV. A compositionally biased stretch (polar residues) spans 30 to 40; that stretch reads TLPSLLEQNLD. A compositionally biased stretch (acidic residues) spans 72-81; sequence DEDATADTAD. A KH domain is found at 198 to 250; the sequence is GDHVSRAIGRIAGKDGRTKLVIENTTKTRIVVANTKIHILGAYQNLKLARNAV.

This sequence belongs to the PNO1 family. As to quaternary structure, part of the small subunit (SSU) processome, composed of more than 70 proteins and the RNA chaperone small nucleolar RNA (snoRNA) U3.

It localises to the nucleus. The protein localises to the nucleolus. Part of the small subunit (SSU) processome, first precursor of the small eukaryotic ribosomal subunit. During the assembly of the SSU processome in the nucleolus, many ribosome biogenesis factors, an RNA chaperone and ribosomal proteins associate with the nascent pre-rRNA and work in concert to generate RNA folding, modifications, rearrangements and cleavage as well as targeted degradation of pre-ribosomal RNA by the RNA exosome. Positively regulates dimethylation of two adjacent adenosines in the loop of a conserved hairpin near the 3'-end of 18S rRNA. The protein is RNA-binding protein pno-1 of Caenorhabditis elegans.